The following is a 64-amino-acid chain: Conotoxin mr5.1a (64 aa).

Positions 1–19 (MRCVPVFVILLLLIASAPS) are cleaved as a signal peptide. Residues 20–48 (VDARLKTKDDMPLPSSHANIKRTLQIHRN) constitute a propeptide that is removed on maturation. Residue Glu60 is modified to 4-carboxyglutamate.

The protein belongs to the conotoxin T superfamily. Post-translationally, contains 2 disulfide bonds that can be either 'C1-C3, C2-C4' or 'C1-C4, C2-C3', since these disulfide connectivities have been observed for conotoxins with cysteine framework V (for examples, see AC P0DQQ7 and AC P81755). As to expression, expressed by the venom duct.

The protein resides in the secreted. The polypeptide is Conotoxin mr5.1a (Conus marmoreus (Marble cone)).